The chain runs to 729 residues: Phosphoribosylformylglycinamidine synthase subunit PurL (729 aa).

Histidine 54 is an active-site residue. The ATP site is built by tyrosine 57 and lysine 96. Glutamate 98 is a binding site for Mg(2+). Residues 99–102 (SHNH) and arginine 121 contribute to the substrate site. Catalysis depends on histidine 100, which acts as the Proton acceptor. Aspartate 122 contributes to the Mg(2+) binding site. Substrate is bound at residue glutamine 245. Position 273 (aspartate 273) interacts with Mg(2+). 317 to 319 (ETQ) contributes to the substrate binding site. Aspartate 495 and glycine 532 together coordinate ATP. Asparagine 533 provides a ligand contact to Mg(2+). Serine 535 serves as a coordination point for substrate.

Belongs to the FGAMS family. As to quaternary structure, monomer. Part of the FGAM synthase complex composed of 1 PurL, 1 PurQ and 2 PurS subunits.

It localises to the cytoplasm. The enzyme catalyses N(2)-formyl-N(1)-(5-phospho-beta-D-ribosyl)glycinamide + L-glutamine + ATP + H2O = 2-formamido-N(1)-(5-O-phospho-beta-D-ribosyl)acetamidine + L-glutamate + ADP + phosphate + H(+). It functions in the pathway purine metabolism; IMP biosynthesis via de novo pathway; 5-amino-1-(5-phospho-D-ribosyl)imidazole from N(2)-formyl-N(1)-(5-phospho-D-ribosyl)glycinamide: step 1/2. Part of the phosphoribosylformylglycinamidine synthase complex involved in the purines biosynthetic pathway. Catalyzes the ATP-dependent conversion of formylglycinamide ribonucleotide (FGAR) and glutamine to yield formylglycinamidine ribonucleotide (FGAM) and glutamate. The FGAM synthase complex is composed of three subunits. PurQ produces an ammonia molecule by converting glutamine to glutamate. PurL transfers the ammonia molecule to FGAR to form FGAM in an ATP-dependent manner. PurS interacts with PurQ and PurL and is thought to assist in the transfer of the ammonia molecule from PurQ to PurL. This chain is Phosphoribosylformylglycinamidine synthase subunit PurL, found in Staphylococcus epidermidis (strain ATCC 12228 / FDA PCI 1200).